The chain runs to 90 residues: Probable Fe(2+)-trafficking protein (90 aa).

This sequence belongs to the Fe(2+)-trafficking protein family.

Functionally, could be a mediator in iron transactions between iron acquisition and iron-requiring processes, such as synthesis and/or repair of Fe-S clusters in biosynthetic enzymes. The protein is Probable Fe(2+)-trafficking protein of Pseudomonas syringae pv. tomato (strain ATCC BAA-871 / DC3000).